A 372-amino-acid polypeptide reads, in one-letter code: 4-hydroxy-3-methylbut-2-en-1-yl diphosphate synthase (flavodoxin) (372 aa).

4 residues coordinate [4Fe-4S] cluster: Cys270, Cys273, Cys305, and Glu312.

The protein belongs to the IspG family. Requires [4Fe-4S] cluster as cofactor.

It carries out the reaction (2E)-4-hydroxy-3-methylbut-2-enyl diphosphate + oxidized [flavodoxin] + H2O + 2 H(+) = 2-C-methyl-D-erythritol 2,4-cyclic diphosphate + reduced [flavodoxin]. Its pathway is isoprenoid biosynthesis; isopentenyl diphosphate biosynthesis via DXP pathway; isopentenyl diphosphate from 1-deoxy-D-xylulose 5-phosphate: step 5/6. Its function is as follows. Converts 2C-methyl-D-erythritol 2,4-cyclodiphosphate (ME-2,4cPP) into 1-hydroxy-2-methyl-2-(E)-butenyl 4-diphosphate. The protein is 4-hydroxy-3-methylbut-2-en-1-yl diphosphate synthase (flavodoxin) of Shigella boydii serotype 18 (strain CDC 3083-94 / BS512).